Here is a 181-residue protein sequence, read N- to C-terminus: Dehydration-responsive element-binding protein 1E (181 aa).

Positions 14–26 (KKRAGRRIFKETR) match the Nuclear localization signal motif. The segment at residues 29-86 (IYRGVRRRDGDKWVCEVREPIHQRRVWLGTYPTADMAARAHDVAVLALRGRSACLNFS) is a DNA-binding region (AP2/ERF).

This sequence belongs to the AP2/ERF transcription factor family. ERF subfamily.

Its subcellular location is the nucleus. Transcriptional activator that binds specifically to the DNA sequence 5'-[AG]CCGAC-3'. Binding to the C-repeat/DRE element mediates cold or dehydration-inducible transcription. CBF/DREB1 factors play a key role in freezing tolerance and cold acclimation. This Arabidopsis thaliana (Mouse-ear cress) protein is Dehydration-responsive element-binding protein 1E (DREB1E).